Consider the following 433-residue polypeptide: Trigger factor (433 aa).

Residues 161-246 (NDRVIIDFVG…LNKVENMILP (86 aa)) enclose the PPIase FKBP-type domain.

This sequence belongs to the FKBP-type PPIase family. Tig subfamily.

Its subcellular location is the cytoplasm. The enzyme catalyses [protein]-peptidylproline (omega=180) = [protein]-peptidylproline (omega=0). Involved in protein export. Acts as a chaperone by maintaining the newly synthesized protein in an open conformation. Functions as a peptidyl-prolyl cis-trans isomerase. The sequence is that of Trigger factor from Haemophilus ducreyi (strain 35000HP / ATCC 700724).